The following is a 104-amino-acid chain: L-rhamnose mutarotase (104 aa).

Residue Y18 participates in substrate binding. H22 (proton donor) is an active-site residue. Substrate contacts are provided by residues Y41 and 76 to 77; that span reads WW.

Belongs to the rhamnose mutarotase family. As to quaternary structure, homodimer.

The protein resides in the cytoplasm. It carries out the reaction alpha-L-rhamnose = beta-L-rhamnose. It functions in the pathway carbohydrate metabolism; L-rhamnose metabolism. Its function is as follows. L-rhamnose mutarotase involved in ulvan degradation. Ulvan is the main polysaccharide component of the Ulvales (green seaweed) cell wall. It is composed of disaccharide building blocks comprising 3-sulfated rhamnose (Rha3S) linked to D-glucuronic acid (GlcA), L-iduronic acid (IduA), or D-xylose (Xyl). L-rhamnose mutarotase catalyzes the anomeric conversion of alpha- to beta-L-rhamnose. This Formosa agariphila (strain DSM 15362 / KCTC 12365 / LMG 23005 / KMM 3901 / M-2Alg 35-1) protein is L-rhamnose mutarotase (rhaM).